A 313-amino-acid polypeptide reads, in one-letter code: Pyrimidine-specific ribonucleoside hydrolase RihB (313 aa).

Asp-11 (proton acceptor) is an active-site residue. Ca(2+)-binding residues include Asp-11, Asp-16, and Val-124. Substrate contacts are provided by Gln-227 and His-239. Asp-240 lines the Ca(2+) pocket.

It belongs to the IUNH family. RihB subfamily. As to quaternary structure, homotetramer. Ca(2+) is required as a cofactor.

The catalysed reaction is a pyrimidine ribonucleoside + H2O = a pyrimidine nucleobase + D-ribose. Functionally, hydrolyzes cytidine or uridine to ribose and cytosine or uracil, respectively. Has a clear preference for cytidine over uridine. Strictly specific for ribonucleosides. The sequence is that of Pyrimidine-specific ribonucleoside hydrolase RihB from Escherichia coli O157:H7.